Consider the following 125-residue polypeptide: Fumarate reductase subunit D (125 aa).

Helical transmembrane passes span 30–50 (FAML…LGVI), 62–82 (AFAT…LPMW), and 105–125 (VACY…IFMI).

Belongs to the FrdD family. As to quaternary structure, part of an enzyme complex containing four subunits: a flavoprotein (FrdA), an iron-sulfur protein (FrdB), and two hydrophobic anchor proteins (FrdC and FrdD).

It is found in the cell inner membrane. Functionally, anchors the catalytic components of the fumarate reductase complex to the cell membrane, binds quinones. The protein is Fumarate reductase subunit D of Vibrio parahaemolyticus serotype O3:K6 (strain RIMD 2210633).